A 78-amino-acid polypeptide reads, in one-letter code: UPF0154 protein SSU98_1719 (78 aa).

Residues 3–23 traverse the membrane as a helical segment; it reads LGLAILLIVLAFAGGVALGIY.

It belongs to the UPF0154 family.

The protein resides in the cell membrane. In Streptococcus suis (strain 98HAH33), this protein is UPF0154 protein SSU98_1719.